Reading from the N-terminus, the 488-residue chain is Serine/threonine-protein kinase haspin homolog hrk1 (488 aa).

The 333-residue stretch at 156 to 488 (TFEIQKIGEA…SLLNWVRQKY (333 aa)) folds into the Protein kinase domain. ATP-binding positions include 162-170 (IGEASYSEV) and K184. D305 serves as the catalytic Proton acceptor.

It belongs to the protein kinase superfamily. Ser/Thr protein kinase family. Haspin subfamily. As to quaternary structure, interacts with pds5 and swi6.

It is found in the cytoplasm. Its subcellular location is the chromosome. The catalysed reaction is L-seryl-[protein] + ATP = O-phospho-L-seryl-[protein] + ADP + H(+). It carries out the reaction L-threonyl-[protein] + ATP = O-phospho-L-threonyl-[protein] + ADP + H(+). In terms of biological role, serine/threonine haspin-like protein kinase involved in cell cycle regulation. Acts in chromosomal passenger complex (CPC) targeting to centromeres by phosphorylating histone H3 at 'Thr3' (H3T3ph). In Schizosaccharomyces pombe (strain 972 / ATCC 24843) (Fission yeast), this protein is Serine/threonine-protein kinase haspin homolog hrk1 (hrk1).